Here is a 301-residue protein sequence, read N- to C-terminus: uncharacterized protein (301 aa).

2 disordered regions span residues 167-186 (DVHL…PKER) and 225-244 (ASES…EGAS). Residues 170-181 (LNSTTPPHTAQV) show a composition bias toward polar residues. Positions 226–237 (SESSLETSSVSS) are enriched in low complexity.

This is an uncharacterized protein from Mus musculus (Mouse).